The following is a 440-amino-acid chain: Probable aldose 1-epimerase ARB_05372 (440 aa).

An N-terminal signal peptide occupies residues 1-24 (MCGVLRQLMLLLLAFLSITPSCSA). Residues Asn-32, Asn-38, Asn-43, Asn-68, and Asn-112 are each glycosylated (N-linked (GlcNAc...) asparagine). 125–126 (NR) contributes to the substrate binding site. Residues Asn-129, Asn-147, Asn-163, Asn-171, and Asn-199 are each glycosylated (N-linked (GlcNAc...) asparagine). His-233 acts as the Proton donor in catalysis. 4 N-linked (GlcNAc...) asparagine glycosylation sites follow: Asn-243, Asn-275, Asn-281, and Asn-306. Residue Asp-311 participates in substrate binding. N-linked (GlcNAc...) asparagine glycans are attached at residues Asn-321, Asn-337, Asn-365, and Asn-385. Glu-401 functions as the Proton acceptor in the catalytic mechanism.

Belongs to the aldose epimerase family. As to quaternary structure, monomer.

The protein resides in the secreted. The catalysed reaction is alpha-D-glucose = beta-D-glucose. It functions in the pathway carbohydrate metabolism; hexose metabolism. Mutarotase converts alpha-aldose to the beta-anomer. It is active on D-glucose, L-arabinose, D-xylose, D-galactose, maltose and lactose. This Arthroderma benhamiae (strain ATCC MYA-4681 / CBS 112371) (Trichophyton mentagrophytes) protein is Probable aldose 1-epimerase ARB_05372.